The chain runs to 746 residues: Dystrobrevin alpha (746 aa).

The tract at residues 1 to 288 is interaction with MAGEE1; that stretch reads MIEDSGKRGN…SHSNQHQMKE (288 aa). The ZZ-type zinc-finger motif lies at 238–294; the sequence is FHPVECSYCHSESMMGFRYRCQQCHNYQLCQDCFWRGHAGGSHSNQHQMKEYTSWKS. Cys243, Cys246, Cys258, Cys261, Cys267, Cys270, His280, and His284 together coordinate Zn(2+). The segment at 397 to 447 is syntrophin-binding region; it reads DRLADEHVLIGLYVNMLRNDPPCMLESSNRLDEEHRLIARYAARLAAESSS. Residues 458-557 adopt a coiled-coil conformation; that stretch reads DISFTIDANK…KLLKEEELKQ (100 aa). Disordered stretches follow at residues 555 to 577, 646 to 667, and 684 to 721; these read LKQGTQGASSPRSSPSHTISRPI, ETESTVDSEFSRPQFEDLAPSP, and YIHGGAASTTHGDMVPEDGDPYTQPEDGNYENESVRQL. The segment covering 563–576 has biased composition (low complexity); the sequence is SSPRSSPSHTISRP. Ser666 carries the post-translational modification Phosphoserine.

This sequence belongs to the dystrophin family. Dystrobrevin subfamily. As to quaternary structure, interacts with dystrophin, utrophin and the syntrophins SNTA1, SNTB1, SNTB2, SNTG1 and SNTG2. Binds dystrobrevin binding protein 1. Interacts with MAGEE1. Interacts with Ctnnal1. The interaction is required for correct localization of both Ctnnal1 and Dtna. Does not interact with utrophin. In terms of assembly, does not interact with syntrophin. In terms of processing, phosphorylation of isoform 2 on tyrosine kinase substrate domain present in the C-terminus. Expressed in skeletal muscle, heart, lung and brain. Sarcolemma and neuromuscular junction in skeletal muscle. Isoform 2 is restricted to the neuromuscular junction. Isoforms 5 and 6 are only expressed in muscle.

The protein localises to the cytoplasm. It localises to the synapse. Its subcellular location is the cell membrane. Functionally, involved in synapse maturation and required for normal muscle function. The chain is Dystrobrevin alpha (Dtna) from Mus musculus (Mouse).